Here is a 466-residue protein sequence, read N- to C-terminus: IQ domain-containing protein C (466 aa).

Residues 6–35 form the IQ domain; the sequence is LVRKVSALQACVRGFLVRRQFQSLRAEYEA. 4 disordered regions span residues 105–157, 214–233, 238–310, and 394–466; these read KSGE…PHSQ, EQAC…DQSY, TGEL…QTFG, and VLDL…EPPG. Over residues 132 to 153 the composition is skewed to basic and acidic residues; sequence PSQEKTRDTTRMENPEATDQRL. Over residues 282–293 the composition is skewed to polar residues; the sequence is GPPSSIPSNSQA. Residues 297–306 are compositionally biased toward basic and acidic residues; sequence RLTKGPDDGR. Serine 438 carries the post-translational modification Phosphoserine.

This is IQ domain-containing protein C (IQCC) from Homo sapiens (Human).